The primary structure comprises 156 residues: Small ribosomal subunit protein uS7c (156 aa).

Belongs to the universal ribosomal protein uS7 family. In terms of assembly, part of the 30S ribosomal subunit.

Its subcellular location is the plastid. The protein resides in the chloroplast. Its function is as follows. One of the primary rRNA binding proteins, it binds directly to 16S rRNA where it nucleates assembly of the head domain of the 30S subunit. The protein is Small ribosomal subunit protein uS7c (rps7) of Rhodomonas salina (Cryptomonas salina).